The primary structure comprises 93 residues: Large ribosomal subunit protein bL31 (93 aa).

A disordered region spans residues 68–93 (GSADAAADEKKTDAKNNNKDNTSKED). The segment covering 74 to 93 (ADEKKTDAKNNNKDNTSKED) has biased composition (basic and acidic residues).

The protein belongs to the bacterial ribosomal protein bL31 family. Type A subfamily. As to quaternary structure, part of the 50S ribosomal subunit.

In terms of biological role, binds the 23S rRNA. The sequence is that of Large ribosomal subunit protein bL31 from Prochlorococcus marinus (strain MIT 9303).